The chain runs to 140 residues: VapC ribonuclease Y4jK (140 aa).

One can recognise a PINc domain in the interval I2–N135. D5 and D104 together coordinate Mg(2+).

Belongs to the PINc/VapC protein family. The cofactor is Mg(2+).

Functionally, toxic component of a type II toxin-antitoxin (TA) system. An RNase. Involved in plasmid stability. The chain is VapC ribonuclease Y4jK from Sinorhizobium fredii (strain NBRC 101917 / NGR234).